We begin with the raw amino-acid sequence, 350 residues long: Biotin synthase (350 aa).

In terms of domain architecture, Radical SAM core spans 63–281 (GDIELATLLS…IAVARITMPK (219 aa)). [4Fe-4S] cluster-binding residues include Cys78, Cys82, and Cys85. The [2Fe-2S] cluster site is built by Cys122, Cys153, Cys213, and Arg285.

The protein belongs to the radical SAM superfamily. Biotin synthase family. In terms of assembly, homodimer. [4Fe-4S] cluster is required as a cofactor. [2Fe-2S] cluster serves as cofactor.

The catalysed reaction is (4R,5S)-dethiobiotin + (sulfur carrier)-SH + 2 reduced [2Fe-2S]-[ferredoxin] + 2 S-adenosyl-L-methionine = (sulfur carrier)-H + biotin + 2 5'-deoxyadenosine + 2 L-methionine + 2 oxidized [2Fe-2S]-[ferredoxin]. Its pathway is cofactor biosynthesis; biotin biosynthesis; biotin from 7,8-diaminononanoate: step 2/2. Its function is as follows. Catalyzes the conversion of dethiobiotin (DTB) to biotin by the insertion of a sulfur atom into dethiobiotin via a radical-based mechanism. The chain is Biotin synthase from Acidovorax sp. (strain JS42).